The chain runs to 167 residues: EF-hand calcium-binding domain-containing protein 11 (167 aa).

3 consecutive EF-hand domains span residues Ala-17 to Tyr-52, Asp-91 to Arg-126, and Leu-127 to Asn-162. Residues Asp-140, Asp-142, Asp-144, His-146, and Asp-151 each contribute to the Ca(2+) site.

The sequence is that of EF-hand calcium-binding domain-containing protein 11 (efcab11) from Danio rerio (Zebrafish).